The sequence spans 477 residues: MEWDTVIGLEVHAQLKTKSKLFSGASTAFGATPNSQTSFIDAGLPGVLPVLNEQAIIMAIQFGLAIHGTINDLSVFERKNYFYPDLPKGYQISQYQKPIVTNGYLNIQLGNNLEKTVHIARAHLEEDAGKSLHDAHTDYTGIDLNRAGTPLLEIVTTPCLYSAEEAINYLKTLHQLVRFLGICDGNMQEGSFRCDVNLSIKPKGSSVLGTRTELKNLNSFRFIEKAIAFEQARHQDILESGLSVIQETRLYNPDNNTTQAMRGKENENDYRYFPDPDLLPIHIDKEQVEEIKNNLPDLPEAISKELKNTPSLNDEDINFILSSPDTYQYYKKIKSLCPAADKTIINWLKGQYAAFLNEHNLTFETPPISAKTMAAFLSKIHEKKISSSIAKNIFSMLCTGEKDIDAIIEREGYQQQNDNSALEEIVEQIIKQYPEQVTEYKAGKEKLLAFFIGQAMKQTKGKANPEQINLLLKKHLG.

The protein belongs to the GatB/GatE family. GatB subfamily. As to quaternary structure, heterotrimer of A, B and C subunits.

The catalysed reaction is L-glutamyl-tRNA(Gln) + L-glutamine + ATP + H2O = L-glutaminyl-tRNA(Gln) + L-glutamate + ADP + phosphate + H(+). It carries out the reaction L-aspartyl-tRNA(Asn) + L-glutamine + ATP + H2O = L-asparaginyl-tRNA(Asn) + L-glutamate + ADP + phosphate + 2 H(+). In terms of biological role, allows the formation of correctly charged Asn-tRNA(Asn) or Gln-tRNA(Gln) through the transamidation of misacylated Asp-tRNA(Asn) or Glu-tRNA(Gln) in organisms which lack either or both of asparaginyl-tRNA or glutaminyl-tRNA synthetases. The reaction takes place in the presence of glutamine and ATP through an activated phospho-Asp-tRNA(Asn) or phospho-Glu-tRNA(Gln). The chain is Aspartyl/glutamyl-tRNA(Asn/Gln) amidotransferase subunit B from Legionella pneumophila subsp. pneumophila (strain Philadelphia 1 / ATCC 33152 / DSM 7513).